Here is a 336-residue protein sequence, read N- to C-terminus: Dihydroorotate dehydrogenase (quinone) (336 aa).

Residues Ala-62–Lys-66 and Thr-86 each bind FMN. Residue Lys-66 participates in substrate binding. A substrate-binding site is contributed by Asn-111–Phe-115. FMN-binding residues include Asn-139 and Asn-172. Residue Asn-172 participates in substrate binding. Ser-175 acts as the Nucleophile in catalysis. Asn-177 provides a ligand contact to substrate. 2 residues coordinate FMN: Lys-217 and Thr-245. A substrate-binding site is contributed by Asn-246–Thr-247. FMN contacts are provided by residues Gly-268, Gly-297, and Tyr-318 to Ser-319.

The protein belongs to the dihydroorotate dehydrogenase family. Type 2 subfamily. In terms of assembly, monomer. It depends on FMN as a cofactor.

It localises to the cell membrane. The enzyme catalyses (S)-dihydroorotate + a quinone = orotate + a quinol. Its pathway is pyrimidine metabolism; UMP biosynthesis via de novo pathway; orotate from (S)-dihydroorotate (quinone route): step 1/1. In terms of biological role, catalyzes the conversion of dihydroorotate to orotate with quinone as electron acceptor. The protein is Dihydroorotate dehydrogenase (quinone) of Aliivibrio fischeri (strain MJ11) (Vibrio fischeri).